The chain runs to 214 residues: MMLDPINHHFQAHEEAYYSRFFNEQRGLHMIKVLPGGVYVSDQEELICTGLGSCVSACIWDPVKRVGGMNHFLLPFHNHFEEKHWHADELLSGASRYGSYAMEMLLNQLLSLGARRERLRMKLFGGAQMMGFHSMIGEKNVEFVLHYAEQEGLEVVAYDLGGLEPRKIMFDPLTGKAWLKRIPFAEINHLRREEERYAHTLEKQTDNDSEVELF.

This sequence belongs to the CheD family.

The catalysed reaction is L-glutaminyl-[protein] + H2O = L-glutamyl-[protein] + NH4(+). Functionally, probably deamidates glutamine residues to glutamate on methyl-accepting chemotaxis receptors (MCPs), playing an important role in chemotaxis. The chain is Probable chemoreceptor glutamine deamidase CheD from Vibrio vulnificus (strain CMCP6).